The chain runs to 175 residues: ATP-dependent protease subunit HslV (175 aa).

Thr2 is a catalytic residue. The Na(+) site is built by Ala156, Cys159, and Thr162.

This sequence belongs to the peptidase T1B family. HslV subfamily. In terms of assembly, a double ring-shaped homohexamer of HslV is capped on each side by a ring-shaped HslU homohexamer. The assembly of the HslU/HslV complex is dependent on binding of ATP.

The protein resides in the cytoplasm. The enzyme catalyses ATP-dependent cleavage of peptide bonds with broad specificity.. With respect to regulation, allosterically activated by HslU binding. Its function is as follows. Protease subunit of a proteasome-like degradation complex believed to be a general protein degrading machinery. The polypeptide is ATP-dependent protease subunit HslV (Rhizobium johnstonii (strain DSM 114642 / LMG 32736 / 3841) (Rhizobium leguminosarum bv. viciae)).